The sequence spans 368 residues: Alanine racemase (368 aa).

Lys40 serves as the catalytic Proton acceptor; specific for D-alanine. N6-(pyridoxal phosphate)lysine is present on Lys40. Arg134 contributes to the substrate binding site. The active-site Proton acceptor; specific for L-alanine is Tyr263. Met310 is a substrate binding site.

It belongs to the alanine racemase family. It depends on pyridoxal 5'-phosphate as a cofactor.

The catalysed reaction is L-alanine = D-alanine. It participates in amino-acid biosynthesis; D-alanine biosynthesis; D-alanine from L-alanine: step 1/1. Functionally, catalyzes the interconversion of L-alanine and D-alanine. May also act on other amino acids. The polypeptide is Alanine racemase (alr) (Listeria monocytogenes serotype 4b (strain F2365)).